Here is a 1017-residue protein sequence, read N- to C-terminus: Probable DNA ligase (1017 aa).

The interval 1–363 (MPWDVKFSHG…PACATPLHAP (363 aa)) is unknown. The interval 326–352 (GIRSSPPQVRAGDATPSSRSSGDAGVA) is disordered. The segment at 364–1017 (DSFARFVAAA…GARPPPAASD (654 aa)) is DNA ligase. Residue Glu667 participates in ATP binding. The active-site N6-AMP-lysine intermediate is the Lys669. ATP is bound by residues Arg674, Arg689, Glu717, Arg860, and Lys866.

In the C-terminal section; belongs to the ATP-dependent DNA ligase family. It depends on Mg(2+) as a cofactor.

It catalyses the reaction ATP + (deoxyribonucleotide)n-3'-hydroxyl + 5'-phospho-(deoxyribonucleotide)m = (deoxyribonucleotide)n+m + AMP + diphosphate.. Functionally, DNA ligase that seals nicks in double-stranded DNA during DNA replication, DNA recombination and DNA repair. The protein is Probable DNA ligase (lig) of Opitutus terrae (strain DSM 11246 / JCM 15787 / PB90-1).